The following is a 107-amino-acid chain: uncharacterized protein (107 aa).

Residues 52 to 72 form a helical membrane-spanning segment; the sequence is LIIHDLFIYIFILNFFFFPFC.

It is found in the membrane. This is an uncharacterized protein from Saccharomyces cerevisiae (strain ATCC 204508 / S288c) (Baker's yeast).